Reading from the N-terminus, the 89-residue chain is Putative regulatory protein Nther_1328 (89 aa).

This sequence belongs to the RemA family.

This is Putative regulatory protein Nther_1328 from Natranaerobius thermophilus (strain ATCC BAA-1301 / DSM 18059 / JW/NM-WN-LF).